Consider the following 151-residue polypeptide: Nucleoside diphosphate kinase (151 aa).

Residues K10, F58, R86, T92, R103, and N113 each contribute to the ATP site. Catalysis depends on H116, which acts as the Pros-phosphohistidine intermediate.

It belongs to the NDK family. Homotetramer. The cofactor is Mg(2+).

Its subcellular location is the cytoplasm. The enzyme catalyses dZDP + ATP = dZTP + ADP. It carries out the reaction a 2'-deoxyribonucleoside 5'-diphosphate + ATP = a 2'-deoxyribonucleoside 5'-triphosphate + ADP. It catalyses the reaction a ribonucleoside 5'-diphosphate + ATP = a ribonucleoside 5'-triphosphate + ADP. It functions in the pathway purine metabolism. Functionally, major role in the synthesis of nucleoside triphosphates other than ATP. The ATP gamma phosphate is transferred to the NDP beta phosphate via a ping-pong mechanism, using a phosphorylated active-site intermediate. Its function is as follows. (Microbial infection) Catalyzes the phosphorylation of dZDP to dZTP, when the bacterium is infected by a phage that produces the substrate for the synthesis of dZTP (2- amino-2'-deoxyadenosine 5'-triphosphate), which is then used by the phage as a DNA polymerase substrate. This Synechococcus sp. (strain CC9902) protein is Nucleoside diphosphate kinase.